The primary structure comprises 637 residues: Choline O-acetyltransferase (637 aa).

A compositionally biased stretch (basic and acidic residues) spans methionine 1–glycine 13. The tract at residues methionine 1 to lysine 20 is disordered. Catalysis depends on histidine 329, which acts as the Proton acceptor. Residues glycine 407 to aspartate 419, serine 445, and glutamine 545 contribute to the CoA site.

It belongs to the carnitine/choline acetyltransferase family.

It catalyses the reaction choline + acetyl-CoA = acetylcholine + CoA. Its function is as follows. Catalyzes the reversible synthesis of acetylcholine (ACh) from acetyl CoA and choline at cholinergic synapses. The sequence is that of Choline O-acetyltransferase (chat) from Danio rerio (Zebrafish).